The primary structure comprises 96 residues: uncharacterized protein (96 aa).

3 consecutive transmembrane segments (helical) span residues 2 to 22 (FIFN…ICYF), 38 to 58 (AGLK…TVML), and 68 to 88 (LTLA…QLIV).

The protein localises to the membrane. This is an uncharacterized protein from Schizosaccharomyces pombe (strain 972 / ATCC 24843) (Fission yeast).